We begin with the raw amino-acid sequence, 643 residues long: Sodium/iodide cotransporter (643 aa).

Residues 1–14 (MEAVETGERPTFGA) lie on the Extracellular side of the membrane. A helical transmembrane segment spans residues 15–31 (WDYGVFALMLLVSTGIG). Residues 32 to 56 (LWVGLARGGQRSAEDFFTGGRRLAA) are Cytoplasmic-facing. The chain crosses the membrane as a discontinuously helical span at residues 57–80 (LPVGLSLSASFMSAVQVLGVPSEA). 3 residues coordinate Na(+): Ser-69, Val-71, and Gln-72. An iodide-binding site is contributed by Val-76. The Extracellular portion of the chain corresponds to 81–84 (YRYG). Residues 85–105 (LKFLWMCLGQLLNSVLTALLF) traverse the membrane as a helical segment. Met-90 lines the iodide pocket. The Cytoplasmic segment spans residues 106–130 (MPVFYRLGLTSTYEYLEMRFSRAVR). The chain crosses the membrane as a helical span at residues 131 to 157 (LCGTLQYIVATMLYTGIVIYAPALILN). Tyr-144 lines the Na(+) pocket. The Extracellular segment spans residues 158 to 163 (QVTGLD). Residues 164–181 (IWASLLSTGIICTFYTAV) form a helical membrane-spanning segment. The Cytoplasmic portion of the chain corresponds to 182-189 (GGMKAVVW). Residues 190-208 (TDVFQVVVMLSGFWVVLAR) form a helical membrane-spanning segment. Residues 209-243 (GVMLVGGPRQVLTLAQNHSRINLMDFNPDPRSRYT) are Extracellular-facing. The discontinuously helical transmembrane segment at 244–266 (FWTFVVGGTLVWLSMYGVNQAQV) threads the bilayer. Iodide is bound at residue Trp-255. Met-258 is a Na(+) binding site. At 267-278 (QRYVACRTEKQA) the chain is on the cytoplasmic side. Residues 279–301 (KLALLINQVGLFLIVSSAACCGI) traverse the membrane as a helical segment. At 302–335 (VMFVFYTDCDPLLLGRISAPDQYMPLLVLDIFED) the chain is on the extracellular side. A helical transmembrane segment spans residues 336–363 (LPGVPGLFLACAYSGTLSTASTSINAMA). Residues 364 to 386 (AVTVEDLIKPRLRSLAPRKLVII) are Cytoplasmic-facing. Residues 387–408 (SKGLSLIYGSACLTVAALSSLL) traverse the membrane as a helical segment. Topologically, residues 409–411 (GGG) are extracellular. A helical membrane pass occupies residues 412–437 (VLQGSFTVMGVISGPLLGAFILGMFL). Residue Leu-413 participates in iodide binding. Na(+) is bound by residues Ser-416 and Phe-417. Position 417 (Phe-417) interacts with iodide. Topologically, residues 438 to 441 (PACN) are cytoplasmic. The helical transmembrane segment at 442–465 (TPGVLAGLGAGLALSLWVALGATL) threads the bilayer. Over 466-525 (YPPSEQTMRVLPSSAARCVALSVNASGLLDPALLPANDSSRAPSSGMDASRPALADSFYA) the chain is Extracellular. 2 N-linked (GlcNAc...) asparagine glycosylation sites follow: Asn-489 and Asn-502. The helical transmembrane segment at 526–550 (ISYLYYGALGTLTTVLCGALISCLT) threads the bilayer. The Cytoplasmic segment spans residues 551–643 (GPTKRSTLAP…GGRDQQETNL (93 aa)). The residue at position 556 (Ser-556) is a Phosphoserine; by PKA. Positions 623–643 (AGSWTPCVGHDGGRDQQETNL) are disordered. The segment covering 633 to 643 (DGGRDQQETNL) has biased composition (basic and acidic residues).

The protein belongs to the sodium:solute symporter (SSF) (TC 2.A.21) family. In terms of assembly, monomer. Glycosylated. Expression is primarily in thyroid tissue, but also to a lower extent in mammary gland and ovary. Expression is reduced in tumors.

It is found in the cell membrane. Its subcellular location is the cytoplasm. The catalysed reaction is iodide(out) + 2 Na(+)(out) = iodide(in) + 2 Na(+)(in). The enzyme catalyses chlorate(out) + 2 Na(+)(out) = chlorate(in) + 2 Na(+)(in). It catalyses the reaction thiocyanate(out) + 2 Na(+)(out) = thiocyanate(in) + 2 Na(+)(in). It carries out the reaction nitrate(out) + 2 Na(+)(out) = nitrate(in) + 2 Na(+)(in). The catalysed reaction is selenocyanate(out) + 2 Na(+)(out) = selenocyanate(in) + 2 Na(+)(in). With respect to regulation, dysidenin and perchlorate inhibit iodide transport activity. Oxyanions inhibit iodide transport activity by blocking the binding sites for iodide and one of the sodium ions. Sodium:iodide symporter that mediates the transport of iodide into the thyroid gland. Can also mediate the transport of chlorate, thiocynate, nitrate and selenocynate. In Homo sapiens (Human), this protein is Sodium/iodide cotransporter (SLC5A5).